The sequence spans 204 residues: Octanoyltransferase (204 aa).

A BPL/LPL catalytic domain is found at 27 to 202 (QGGEEALLLL…RFQPFLHLHL (176 aa)). Residues 65 to 72 (RGGDVTYH), 132 to 134 (SIG), and 145 to 147 (GFA) each bind substrate. C163 (acyl-thioester intermediate) is an active-site residue.

It belongs to the LipB family.

It localises to the cytoplasm. The catalysed reaction is octanoyl-[ACP] + L-lysyl-[protein] = N(6)-octanoyl-L-lysyl-[protein] + holo-[ACP] + H(+). The protein operates within protein modification; protein lipoylation via endogenous pathway; protein N(6)-(lipoyl)lysine from octanoyl-[acyl-carrier-protein]: step 1/2. Functionally, catalyzes the transfer of endogenously produced octanoic acid from octanoyl-acyl-carrier-protein onto the lipoyl domains of lipoate-dependent enzymes. Lipoyl-ACP can also act as a substrate although octanoyl-ACP is likely to be the physiological substrate. This Geobacter sp. (strain M21) protein is Octanoyltransferase.